The sequence spans 382 residues: MNSLDLPKAPQDTRVVVAMSGGVDSSVVAGLLRRQGYDVVGITLQLYDHGAATHRRGACCAGQDIHDARRAAETLGIPHYVLDYEDRFREAVIDRFAESYIHGETPIPCVECNRSIKFRDLLATALDLGADALATGHYVASRARPGGGRALYRALDPARDQSYFLYATTPEQLDVLRFPLGELPKDETRRLAREFGLAVADKPDSQDICFVPQGRYQDVIARLRPDAARPGEIVHLDGRTLGRHEGIIGFTVGQRRGLGLATGEPLYVVRLDPETARVVVGPREALATSVIRIAETNWLGDEPLADLDGMPVAVRVRSTREPRPAALRWNRALACAEVVLETPEDGVSPGQACAIYADDGPRARVLGGGTIQKVEAARREAA.

Residues 18-25 and Leu44 contribute to the ATP site; that span reads AMSGGVDS. Cys112 serves as the catalytic Nucleophile. Cys112 and Cys209 are disulfide-bonded. Gly136 contributes to the ATP binding site. The interval 159 to 161 is interaction with tRNA; the sequence is RDQ. The active-site Cysteine persulfide intermediate is the Cys209.

This sequence belongs to the MnmA/TRMU family.

The protein resides in the cytoplasm. The catalysed reaction is S-sulfanyl-L-cysteinyl-[protein] + uridine(34) in tRNA + AH2 + ATP = 2-thiouridine(34) in tRNA + L-cysteinyl-[protein] + A + AMP + diphosphate + H(+). Catalyzes the 2-thiolation of uridine at the wobble position (U34) of tRNA, leading to the formation of s(2)U34. This is tRNA-specific 2-thiouridylase MnmA from Methylobacterium sp. (strain 4-46).